We begin with the raw amino-acid sequence, 305 residues long: Small ribosomal subunit biogenesis GTPase RsgA (305 aa).

The CP-type G domain occupies 67-224; sequence SSELVRPAVA…VADTPGFSSF (158 aa). Residues 116–119 and 166–174 contribute to the GTP site; these read NKID and GQSGVGKST. Cysteine 248, cysteine 253, histidine 255, and cysteine 261 together coordinate Zn(2+).

The protein belongs to the TRAFAC class YlqF/YawG GTPase family. RsgA subfamily. In terms of assembly, monomer. Associates with 30S ribosomal subunit, binds 16S rRNA. It depends on Zn(2+) as a cofactor.

It localises to the cytoplasm. One of several proteins that assist in the late maturation steps of the functional core of the 30S ribosomal subunit. Helps release RbfA from mature subunits. May play a role in the assembly of ribosomal proteins into the subunit. Circularly permuted GTPase that catalyzes slow GTP hydrolysis, GTPase activity is stimulated by the 30S ribosomal subunit. The chain is Small ribosomal subunit biogenesis GTPase RsgA from Ruminiclostridium cellulolyticum (strain ATCC 35319 / DSM 5812 / JCM 6584 / H10) (Clostridium cellulolyticum).